The primary structure comprises 281 residues: Probable endonuclease 4 (281 aa).

Zn(2+) is bound by residues His-69, His-109, Glu-145, Asp-179, His-182, His-216, Asp-229, His-231, and Glu-261.

Belongs to the AP endonuclease 2 family. Requires Zn(2+) as cofactor.

The catalysed reaction is Endonucleolytic cleavage to 5'-phosphooligonucleotide end-products.. Its function is as follows. Endonuclease IV plays a role in DNA repair. It cleaves phosphodiester bonds at apurinic or apyrimidinic (AP) sites, generating a 3'-hydroxyl group and a 5'-terminal sugar phosphate. In Aeromonas hydrophila subsp. hydrophila (strain ATCC 7966 / DSM 30187 / BCRC 13018 / CCUG 14551 / JCM 1027 / KCTC 2358 / NCIMB 9240 / NCTC 8049), this protein is Probable endonuclease 4.